Here is a 156-residue protein sequence, read N- to C-terminus: Endoribonuclease YbeY (156 aa).

The Zn(2+) site is built by histidine 115, histidine 119, and histidine 125.

The protein belongs to the endoribonuclease YbeY family. Requires Zn(2+) as cofactor.

Its subcellular location is the cytoplasm. Single strand-specific metallo-endoribonuclease involved in late-stage 70S ribosome quality control and in maturation of the 3' terminus of the 16S rRNA. In Actinobacillus succinogenes (strain ATCC 55618 / DSM 22257 / CCUG 43843 / 130Z), this protein is Endoribonuclease YbeY.